Here is a 115-residue protein sequence, read N- to C-terminus: Large ribosomal subunit protein bL19 (115 aa).

The protein belongs to the bacterial ribosomal protein bL19 family.

In terms of biological role, this protein is located at the 30S-50S ribosomal subunit interface and may play a role in the structure and function of the aminoacyl-tRNA binding site. The sequence is that of Large ribosomal subunit protein bL19 from Tropheryma whipplei (strain TW08/27) (Whipple's bacillus).